Here is a 1577-residue protein sequence, read N- to C-terminus: MKSKNFKLSPSGRLAASLAIIFVSLNAYGNGIVPDAGHQGPDVSAVNGGTQVINIVTPNNEGISHNQYQDFNVGKPGAVFNNALEAGQSQLAGHLNANSNLNGQAASLILNEVVSRNPSFLLGQQEVFGIAAEYVLSNPNGITCDGCGFINTSRSSLVVGNPLFENGQLKGYSTLNNTNLLSLGKNGLNTTGLLDLIAPRIDSRGKITAAEISAFTGQNTFSQHFDILSSQKPVSALDSYFFGSMQSGRIRIINTAEGSGVKLAGKFTADNDLSVKADNIQTDSQVRYDSYDKDGSENYQNYRGGITVNNSGSSQTLTKTELKGKNITLVASSHNQIKASDLMGDDITLQGADLTIDGKQLQQKETDIDNRWFYSWKYDVTKEKEQIQQIGSQIDAKNNATLTATKGDVTLDAAKINAGNNLAINANKDIHINGLVEKESRSENGNKRNHTSRLESGSWSNSHQTETLKASELTAGKDLGLDAQGSITAQGAKLHANENVLVNAKDNINLNVQKTNNDKTVTDNHVMWGGIGGGQNKNNNNQQQVSHATQLTADGQLLLAADNNVNITGSQVKGNQGAFVKTTQGDVVIDNALSETISKIDERTGTAFNITKSSHKNETNKQTSTGSELISDAQLTVVSGNDVNVIGSLIKSADKLGIHSLGDINVKSAQQVTKIDDEKTSLAITGHAKEVEDKQYSAGFHITHTTNKNTSTETEQANSTISGANVDLQANKDVTFAGSDLKTTAGNASITGDNVAFVSTENKKQTDNTDTTISGGFSYTGGVDKVGSKADFQYDKQHTQTEVTKNRGSQTEVAGDLTITANKDLLHEGASHHVEGRYQESGENIQHLAVNDSETSKTDSLNVGIDVGVNLDYSGVTKPVKKAIEDGVNTTKPGNNTDLTKKVTARDAIANLANLSNLETPNVGVEVGIKGGGSQQSQTDSQAVSTSINAGKIDIDSNNKLHDQGTHYQSTQEGISLTANTHTSEATLDKHQTTFHETKGGGQIGVSTKTGSDITVAIKGEGQTTDNALMETKAKGSQFTSNGDISINVGENAHYEGAQFDAQKGKTVINAGGDLTLAQATDTHSESQSNVNGSANLKVGTTPESKDYGGGFNAGTTHHSKEQTTAKVGTITGSQGIELNAGHNLTLQGTHLSSEQDIALNATNKVDLQSASSEHTEKGNNLSGGVQAGFGKKMTDDASSVNGLGSAQFAIGKQDEKSVSREGGTINNSGNLTINGNSVHLQGAQVNSKDTQLTSQSGDIEITSAQSTDYKNNWGTDIGFNGKKTNNTPKEVTEEKPATSIHNIGGKLLVNVEDQQKTSHQNATLETGTLTINSNKDLTLSGANVTADSVTGNVGGSLNIASQKESDRHVTVGVNVGYNHTNDPKSSQVNKTAKAGGSLLEKTIKDTIDSGIKSSTDAISDKYNSLSSTIADKTGISDETKAKIDQGFGKVGNGIKNIVTGAEGHTANADIKVTHVDNDAVTKTTSLTSNNDLSLNVNGSTKLTGAEIVSQQGQVDLGGSSVKLENIEGHHYEAGADLDLKSSVVDLAKQLVGGDISFKSPVKTNETVNTKASISEK.

The N-terminal stretch at 1-29 is a signal peptide; sequence MKSKNFKLSPSGRLAASLAIIFVSLNAYG. A compositionally biased stretch (basic and acidic residues) spans 437 to 446; the sequence is EKESRSENGN. Disordered stretches follow at residues 437 to 467, 1081 to 1103, 1169 to 1188, and 1213 to 1232; these read EKESRSENGNKRNHTSRLESGSWSNSHQTET, TDTHSESQSNVNGSANLKVGTTP, QSASSEHTEKGNNLSGGVQA, and KQDEKSVSREGGTINNSGNL. Composition is skewed to polar residues over residues 454-467, 1081-1095, and 1169-1184; these read LESGSWSNSHQTET, TDTHSESQSNVNGSA, and QSASSEHTEKGNNLSG.

The protein localises to the cell outer membrane. Bacterial hemolysins are exotoxins that attack blood cell membranes and cause cell rupture by mechanisms not clearly defined. Its function is as follows. Cell-bound hemolysin, which releases heme-iron from erythrocytes by interaction with the erythrocyte membrane. HpmA requires HpmB function. The protein is Hemolysin (hpmA) of Proteus mirabilis.